Consider the following 545-residue polypeptide: Chaperonin GroEL (545 aa).

ATP is bound by residues 30–33, K51, 87–91, G415, and D495; these read TLGP and DGTTT.

The protein belongs to the chaperonin (HSP60) family. Forms a cylinder of 14 subunits composed of two heptameric rings stacked back-to-back. Interacts with the co-chaperonin GroES.

The protein resides in the cytoplasm. The enzyme catalyses ATP + H2O + a folded polypeptide = ADP + phosphate + an unfolded polypeptide.. In terms of biological role, together with its co-chaperonin GroES, plays an essential role in assisting protein folding. The GroEL-GroES system forms a nano-cage that allows encapsulation of the non-native substrate proteins and provides a physical environment optimized to promote and accelerate protein folding. This chain is Chaperonin GroEL, found in Yersinia pestis bv. Antiqua (strain Antiqua).